A 367-amino-acid polypeptide reads, in one-letter code: MQLLTLPPSPALATSIRATAQVFEDPKSQALLAHLQQVAPSEASVLIIGETGTGKELVARHIHNLSNRRNRPFIAVNCGAFSESLVEAELFGHEKGAFTGALSAKAGWFEEADGGTLFLDEIGDLPMAIQVKLLRVLQEREVVRLGSRKSIPIDVRVLAATNVQLEKAINAGHFREDLYYRLNVVNLELSPLRDRPGDILPLTRHFIEAYSQRLGYGRVTISPGAEHKLRGYSWPGNIRELENVIHHTLLICRNGVIERDDLRLSNLRIDRPDDQHATADDSPEALLERAFQKLFEQQAGALHEKVEDALLRSAYRFCHYNQVHTASLLGLSRNVTRTRLIKIGELAVNKRRPTENLQGERLIQLSI.

The Sigma-54 factor interaction domain maps to 21–250 (QVFEDPKSQA…LENVIHHTLL (230 aa)). Residues 49–56 (GETGTGKE) and 112–121 (ADGGTLFLDE) contribute to the ATP site.

In terms of biological role, involved in the dimethyl sulfide degradation pathway. Activates the expression of sfnG and sfnF. In Pseudomonas fluorescens (strain Pf0-1), this protein is Sigma54-dependent transcriptional regulator SfnR.